A 193-amino-acid polypeptide reads, in one-letter code: Serine recombinase gin (193 aa).

The Resolvase/invertase-type recombinase catalytic domain occupies M1 to G134. S9 acts as the O-(5'-phospho-DNA)-serine intermediate in catalysis. The segment at residues G138 to R183 is a DNA-binding region (H-T-H motif).

This sequence belongs to the site-specific recombinase resolvase family. As to quaternary structure, homodimer. During inversion, two dimers associate to form a homotetramer.

It localises to the host cytoplasm. Functionally, performs inversion of a viral 3 kp segment (G-segment) that encodes two alternate pairs of tail fiber proteins thereby modifying the host specificity of the virus. Binds as a dimer to the viral gix sites which are 34-bp palindromic sequences that flank the invertible G-segment. Catalyzes site-specific recombination in the presence of the host factor Fis. Gin dimers bound to each of the gix sites and host factor Fis bound to the enhancer come together to form the synaptic complex. Each Gin monomer introduces a nick and becomes covalently attached to the 5'-phosphate of the DNA, resulting in double-stranded staggered breaks at both recombination sites. A 180 degrees rotation of one of the two Gin dimers followed by religation of the DNA leads to the inversion of the G-segment (G+ or G- orientation). The protein is Serine recombinase gin (gin) of Escherichia phage Mu (Bacteriophage Mu).